The sequence spans 392 residues: Proteasomal ATPase-associated factor 1 (392 aa).

Ala2 is modified (N-acetylalanine). WD repeat units follow at residues 90–129 (IHTKSITCLDISSGGGLGVSSSADGSMKIWQASNGELRRV), 132–171 (GHVFDVNCCRFFPSGLVVLSGGMDAQLKIWSAEDASCVVT), 174–215 (GHKG…GVIA), 278–316 (IGSDAFNCCTFLSGFLLLAGTQDGNIYQLDVRNPRTPVQ), and 360–392 (ADCDPVYKVATWEKQIYTCCRDGLVRRYQLSDL).

It belongs to the WD repeat PAAF1/RPN14 family. Interacts with PSMC1, PSMC2, PSMC3, PSMC4, PSMC5 and PSMC6. Interacts with SUPT6H.

Inhibits proteasome 26S assembly and activity by impairing the association of the 19S regulatory complex with the 20S core. Protects SUPT6H from proteasomal degradation. This is Proteasomal ATPase-associated factor 1 (PAAF1) from Bos taurus (Bovine).